The primary structure comprises 341 residues: Methionine import ATP-binding protein MetN 1 (341 aa).

One can recognise an ABC transporter domain in the interval 2 to 241 (IEFRQVSKTF…PKTTIAQNFV (240 aa)). 38-45 (GYSGAGKS) is an ATP binding site.

The protein belongs to the ABC transporter superfamily. Methionine importer (TC 3.A.1.24) family. The complex is composed of two ATP-binding proteins (MetN), two transmembrane proteins (MetI) and a solute-binding protein (MetQ).

Its subcellular location is the cell membrane. It catalyses the reaction L-methionine(out) + ATP + H2O = L-methionine(in) + ADP + phosphate + H(+). It carries out the reaction D-methionine(out) + ATP + H2O = D-methionine(in) + ADP + phosphate + H(+). Part of the ABC transporter complex MetNIQ involved in methionine import. Responsible for energy coupling to the transport system. This chain is Methionine import ATP-binding protein MetN 1, found in Staphylococcus aureus (strain MW2).